The primary structure comprises 359 residues: DNA polymerase IV (359 aa).

Residues 6–186 (IIHVDMDAFY…LPIEAFWGVG (181 aa)) enclose the UmuC domain. Aspartate 10 and aspartate 104 together coordinate Mg(2+). Residue glutamate 105 is part of the active site.

This sequence belongs to the DNA polymerase type-Y family. Monomer. Mg(2+) serves as cofactor.

The protein resides in the cytoplasm. The catalysed reaction is DNA(n) + a 2'-deoxyribonucleoside 5'-triphosphate = DNA(n+1) + diphosphate. In terms of biological role, poorly processive, error-prone DNA polymerase involved in untargeted mutagenesis. Copies undamaged DNA at stalled replication forks, which arise in vivo from mismatched or misaligned primer ends. These misaligned primers can be extended by PolIV. Exhibits no 3'-5' exonuclease (proofreading) activity. May be involved in translesional synthesis, in conjunction with the beta clamp from PolIII. The sequence is that of DNA polymerase IV from Akkermansia muciniphila (strain ATCC BAA-835 / DSM 22959 / JCM 33894 / BCRC 81048 / CCUG 64013 / CIP 107961 / Muc).